A 742-amino-acid polypeptide reads, in one-letter code: MMLLKRSNDNIVLSPIMNRQNRQNNRQNSTKKKPFIPNNQDRFRSKHRDSSRMDPVDNKTLISFTSGKPNQEKSFSHDTGTNKYSSSKLSETFTQTKPNNTDKFRSKYSKQRYSENHKILETISRSHSTILNVDIKDNVELLNQLLSFNKESNQQIPNNPSVPKRVYFVLDKSSNQTDKNMARITDDNKSNGLSIENNSDFVNMILPYVSGAIKNIRVKPWFCSMIIINNFHMENKYFVMILKLWTCYYNIWKKNKKIPEPPKLVTITNHYDDTISNLLPSNTSSFTLDKNSCYTTVVYDNESENLSIGSKARYQRAANIAKHYSDLYRDKSYNGTYVIFVPSKKEYLIVKKHLESIITDKSQLKRIVVTTKFPTEYGISVVIDTMTHYYSDFNMDQESSQTLGWISDNTSKLRRNVINKYSGGIYVVMQSEINYKTFCTKSMTNNFSIYDIVKLIRHNIDPEIIMDDIMDQIRLDSVLIFLKKLGIINANNQLTVMGRFCLEFPLDLRKSAMIYHLYNNGTPNLMLYILVLSVIDNYGSGIYVWPKKEDNEDLIEYTMRIDDIMLELEDKFAGYSDVDTLFNIWTTIAKYGNPLNVNYVRKFCDDNRLNFSKMRNAINLTKDCLDVFSENSFNVNLNLTNFDQPYGKTFYKILEITHFDSKIVVSYDYFKHKTIAYHNDKECCIDNRAIHKIDLGNNPEKTYYALSHNRYTTFTEDDIDIINVLHALPDSDHETQQDFFPD.

The disordered stretch occupies residues 1 to 102 (MMLLKRSNDN…FTQTKPNNTD (102 aa)). The segment covering 18-28 (NRQNRQNNRQN) has biased composition (low complexity). The segment covering 48–57 (RDSSRMDPVD) has biased composition (basic and acidic residues). Composition is skewed to polar residues over residues 60 to 69 (TLISFTSGKP) and 77 to 99 (HDTGTNKYSSSKLSETFTQTKPN).

This is an uncharacterized protein from Acanthamoeba polyphaga mimivirus (APMV).